Here is a 69-residue protein sequence, read N- to C-terminus: MKAKEIRDLTTSEIEEQIKSSKEELFNLRFQLATGQLEETARIRTVRKTIARLKTVAREREIEESKANQ.

It belongs to the universal ribosomal protein uL29 family.

This chain is Large ribosomal subunit protein uL29, found in Staphylococcus haemolyticus (strain JCSC1435).